The sequence spans 668 residues: MPELASVLVRDERSVLPGGFWAAVAVWLEKPQVLNKRLCGSTVGKKWDHVGEESESEGIDVETALAALLEDMSGPGRDEEMLKLISGYGKREEDSGSLTLRTLIPKSNPHFPSCQPRCEIVIRDLPNSVVTFLPLDEANQFKTNNIYQIRLAHVQDDEWSISLYTLCSEAWESDGVVYPKITWMKNELLSKLAKWSTEDKKSEFKSTLSLVPVDKYSRLYQNLKEKYRDMVKVWPEVTDPEKFVYEDVAIATYLLIIWEEERSQNQLKVKQSFVDLGCGNGLLVHILSNEGHPGRGIDVRRRKIWDMYGPQTILEESAILPNDDYLFPDTDWLIGNHSDELTPWLPVIASRSSYSCRYFVLPCCFFNFYGKYNRKSSKKTQYREYLDFVKEVGQQCGFNVEEDCLRIPSTKRVCLIGMSRTYPLTQEKRIDEQRTRYIKSQHTDSLHISTKSSLDKDDPPPLNCHAKNGQVDNVDSSLVQSEKLPGSWMPGFQPREKEEPIRNCALLPRDFIDETVLQVAKLLLYSNTKEKETPITDQSETVWNTGRSLTLREVAEHLHADTLQKLKNECGGLQTLLRNNHQVFKVINSNVSIRDWQKDTPTNTKKRKPEAKRTVPSDVLKTRLCWFYVHHPNGCPRVAKSCPYAHGAEELRPSFISRRKNPRNKLCT.

A disordered region spans residues 441–460; that stretch reads QHTDSLHISTKSSLDKDDPP. The C3H1-type zinc-finger motif lies at 620–649; the sequence is LKTRLCWFYVHHPNGCPRVAKSCPYAHGAE.

This sequence belongs to the TRM44 family.

Its subcellular location is the cytoplasm. It carries out the reaction uridine(44) in tRNA(Ser) + S-adenosyl-L-methionine = 2'-O-methyluridine(44) in tRNA(Ser) + S-adenosyl-L-homocysteine + H(+). In terms of biological role, probable adenosyl-L-methionine (AdoMet)-dependent tRNA (uracil-O(2)-)-methyltransferase. This is Probable tRNA (uracil-O(2)-)-methyltransferase (trmt44) from Xenopus laevis (African clawed frog).